The sequence spans 305 residues: MKKWFSSISKKKVSFSTLLLLGSGIVLSSCSNIDKPNVFRTLSQQSVENKVDYSKLPKENKTVRNLVFGTAEYNDGNYVLVVTTETDSSQINFLNGSNNQAVSTENWAGDLGTTVKQVQNRYSTYPKGVKFLIWNDIDPNPVKWNPFARYPVIASDNELAKQTDKDNSDKLRRNDESAIQYREIVTFIQTVYSGSVNNLINQSNVHAQTVGTDVTKAIVIAFRKNNLDQISAHFYNPDNSNGSNAPGSNQPNQDSGNNGSTTPAAPAAAAAKKSYSAGSFGVKRHAVQVSINFLNFLDSVYTPLN.

The N-terminal stretch at 1 to 29 is a signal peptide; that stretch reads MKKWFSSISKKKVSFSTLLLLGSGIVLSS. The N-palmitoyl cysteine moiety is linked to residue Cys30. Cys30 carries S-diacylglycerol cysteine lipidation. The interval 234–265 is disordered; it reads FYNPDNSNGSNAPGSNQPNQDSGNNGSTTPAA. Over residues 237–258 the composition is skewed to polar residues; it reads PDNSNGSNAPGSNQPNQDSGNN.

The protein resides in the cell membrane. This is an uncharacterized protein from Mycoplasma pneumoniae (strain ATCC 29342 / M129 / Subtype 1) (Mycoplasmoides pneumoniae).